A 315-amino-acid chain; its full sequence is Methionyl-tRNA formyltransferase (315 aa).

The segment at 2 to 189 is N-terminal domain; that stretch reads SESLRIIFAG…LITTLKQLAD (188 aa). (6S)-5,6,7,8-tetrahydrofolate is bound at residue 113 to 116; it reads SLLP. The interval 210 to 315 is C-terminal domain; the sequence is KEEARIDWSL…EWFVPGNRLV (106 aa).

This sequence belongs to the Fmt family.

The catalysed reaction is L-methionyl-tRNA(fMet) + (6R)-10-formyltetrahydrofolate = N-formyl-L-methionyl-tRNA(fMet) + (6S)-5,6,7,8-tetrahydrofolate + H(+). In terms of biological role, attaches a formyl group to the free amino group of methionyl-tRNA(fMet). The formyl group appears to play a dual role in the initiator identity of N-formylmethionyl-tRNA by promoting its recognition by IF2 and preventing the misappropriation of this tRNA by the elongation apparatus. The polypeptide is Methionyl-tRNA formyltransferase (Escherichia coli O157:H7).